We begin with the raw amino-acid sequence, 292 residues long: UPF0696 protein C11orf68 homolog (292 aa).

Positions 1–10 are enriched in low complexity; it reads MAAAAAAVAG. Positions 1–60 are disordered; sequence MAAAAAAVAGAGRGGGGGAEPRQERSRARGWAGAERSEGRRMEPGEELEEEDSPGGREDG. Residues 35 to 44 are compositionally biased toward basic and acidic residues; sequence ERSEGRRMEP.

This sequence belongs to the UPF0696 family.

The polypeptide is UPF0696 protein C11orf68 homolog (Bos taurus (Bovine)).